Reading from the N-terminus, the 349-residue chain is Hydroxymethylglutaryl-CoA synthase (349 aa).

Residues Asp-30 and Ala-31 each coordinate (3S)-3-hydroxy-3-methylglutaryl-CoA. The Proton donor/acceptor role is filled by Glu-82. 2 residues coordinate (3S)-3-hydroxy-3-methylglutaryl-CoA: Cys-114 and Thr-155. Catalysis depends on Cys-114, which acts as the Acyl-thioester intermediate. Arg-203 lines the CoA pocket. (3S)-3-hydroxy-3-methylglutaryl-CoA contacts are provided by Thr-205 and His-238. The Proton donor/acceptor role is filled by His-238. A CoA-binding site is contributed by Lys-243. Residues Asn-270 and Ser-300 each contribute to the (3S)-3-hydroxy-3-methylglutaryl-CoA site.

This sequence belongs to the thiolase-like superfamily. Archaeal HMG-CoA synthase family. Interacts with acetoacetyl-CoA thiolase that catalyzes the precedent step in the pathway and with a DUF35 protein. The acetoacetyl-CoA thiolase/HMG-CoA synthase complex channels the intermediate via a fused CoA-binding site, which allows for efficient coupling of the endergonic thiolase reaction with the exergonic HMGCS reaction.

It carries out the reaction acetoacetyl-CoA + acetyl-CoA + H2O = (3S)-3-hydroxy-3-methylglutaryl-CoA + CoA + H(+). The protein operates within metabolic intermediate biosynthesis; (R)-mevalonate biosynthesis; (R)-mevalonate from acetyl-CoA: step 2/3. Catalyzes the condensation of acetyl-CoA with acetoacetyl-CoA to form 3-hydroxy-3-methylglutaryl-CoA (HMG-CoA). Functions in the mevalonate (MVA) pathway leading to isopentenyl diphosphate (IPP), a key precursor for the biosynthesis of isoprenoid compounds that are building blocks of archaeal membrane lipids. The polypeptide is Hydroxymethylglutaryl-CoA synthase (Methanococcus maripaludis (strain C7 / ATCC BAA-1331)).